A 234-amino-acid polypeptide reads, in one-letter code: bZIP transcription factor 27 (234 aa).

Residues 152 to 159 (KKRGQDSD) carry the Nuclear localization signal motif. The 51-residue stretch at 163–213 (GDRRYKRMIKNRESAARSRARKQAYTNELELEIAHLQTENARLKIQQEQLK) folds into the bZIP domain. The interval 165–184 (RRYKRMIKNRESAARSRARK) is basic motif. The interval 191–212 (LELEIAHLQTENARLKIQQEQL) is leucine-zipper. T231 carries the post-translational modification Phosphothreonine.

Belongs to the bZIP family. As to quaternary structure, self-interacts. Interacts with FT and FD/BZIP14. Interacts with CPK33. In terms of processing, phosphorylated. As to expression, expressed on the flanks of the shoot apex.

The protein localises to the nucleus. In terms of biological role, transcription factor required for the transition to flowering promoted by FT. The polypeptide is bZIP transcription factor 27 (Arabidopsis thaliana (Mouse-ear cress)).